Reading from the N-terminus, the 201-residue chain is Ras-related protein Rab-35 (201 aa).

Residues Gly-18, Val-19, Gly-20, Lys-21, Ser-22, Ser-23, Ser-34, Gly-35, Tyr-37, Thr-39, and Thr-40 each contribute to the GTP site. Ser-22 is a binding site for Mg(2+). The Switch 1 signature appears at 30 to 42; the sequence is DNTFSGSYITTIG. Mg(2+)-binding residues include Thr-40 and Asp-63. A Switch 2 motif is present at residues 64–80; sequence TAGQERFRTITSTYYRG. Gly-66 serves as a coordination point for GTP. Residue Thr-72 is modified to Phosphothreonine; by LRRK2. At Ser-75 the chain carries O-(2-cholinephosphoryl)serine. Tyr-77 bears the O-AMP-tyrosine mark. GTP is bound by residues Asn-120, Lys-121, Asp-123, Ala-151, and Lys-152. 2 S-geranylgeranyl cysteine lipidation sites follow: Cys-200 and Cys-201.

Belongs to the small GTPase superfamily. Rab family. In terms of assembly, interacts with DENND1A and DENND1B; in a nucleotide-dependent manner. Interacts with DENND1C; weak interaction which is nucleotide-independent. Interacts (GTP-bound form) with ACAP2, RUSC2, OCRL MICAL1 and MICALL1; the interaction is direct and probably recruits these effectors to membranes. Interacts with EHD1; the interaction is indirect through MICALL1 and probably recruits EHD1 to membranes. Interacts with GDI1, GDI2, CHM and CHML; phosphorylation at Thr-72 by LRRK2 disrupts these interactions. The cofactor is Mg(2+). Post-translationally, phosphorylation at Thr-72 by LRRK2 prevents the association of regulatory proteins including CHM, CHML and GDP dissociation inhibitors GDI1 and GDI2. In terms of processing, AMPylation at Tyr-77 by L.pneumophila DrrA occurs in the switch 2 region and leads to moderate inactivation of the GTPase activity. It appears to prolong the lifetime of the GTP state of RAB1B by restricting access of GTPase effectors to switch 2 and blocking effector-stimulated GTP hydrolysis, thereby rendering RAB35 constitutively active. Phosphocholinated by L.pneumophila AnkX. Both GDP-bound and GTP-bound forms can be phosphocholinated. Phosphocholination inhibits the GEF activity of DENND1A.

It is found in the cell membrane. The protein localises to the membrane. It localises to the clathrin-coated pit. The protein resides in the cytoplasmic vesicle. Its subcellular location is the clathrin-coated vesicle. It is found in the endosome. The protein localises to the melanosome. The enzyme catalyses GTP + H2O = GDP + phosphate + H(+). Regulated by guanine nucleotide exchange factors (GEFs) including DENND1A, DENND1B and DENND1C which promote the exchange of bound GDP for free GTP. Regulated by GTPase activating proteins (GAPs) including TBC1D10 and TBC1D13 which increase GTP hydrolysis activity. Inhibited by GDP dissociation inhibitors (GDIs) which prevent Rab-GDP dissociation. The small GTPases Rab are key regulators of intracellular membrane trafficking, from the formation of transport vesicles to their fusion with membranes. Rabs cycle between an inactive GDP-bound form and an active GTP-bound form that is able to recruit to membranes different sets of downstream effectors directly responsible for vesicle formation, movement, tethering and fusion. RAB35 is involved in the process of endocytosis and is an essential rate-limiting regulator of the fast recycling pathway back to the plasma membrane. During cytokinesis, required for the postfurrowing terminal steps, namely for intercellular bridge stability and abscission, possibly by controlling phosphatidylinositol 4,5-bis phosphate (PIP2) and SEPT2 localization at the intercellular bridge. May indirectly regulate neurite outgrowth. Together with TBC1D13 may be involved in regulation of insulin-induced glucose transporter SLC2A4/GLUT4 translocation to the plasma membrane in adipocytes. The sequence is that of Ras-related protein Rab-35 from Homo sapiens (Human).